The following is a 277-amino-acid chain: uncharacterized protein (277 aa).

2 disordered regions span residues 33–168 (KNDN…VTTR) and 210–277 (NKLL…PIEF). Residues 34-45 (NDNDERTAHEES) are compositionally biased toward basic and acidic residues. Over residues 86–99 (LKSKSKRKTKKGGS) the composition is skewed to basic residues. 3 stretches are compositionally biased toward basic and acidic residues: residues 100-113 (KPREENVNTEKHIV), 151-168 (AKELSYDELKDKLEVTTR), and 216-230 (TNEDEINKSQRNKEK). A compositionally biased stretch (basic residues) spans 231–241 (DRKRRERRTAR). Over residues 242–258 (RKDERKQEKKQEKKQDN) the composition is skewed to basic and acidic residues. A compositionally biased stretch (polar residues) spans 259-271 (KTSQSFPSSTDMN).

Its subcellular location is the cytoplasm. This is an uncharacterized protein from Saccharomyces cerevisiae (strain ATCC 204508 / S288c) (Baker's yeast).